The primary structure comprises 411 residues: Adenylosuccinate synthetase (411 aa).

GTP is bound by residues 11–17 (GDEGKGK) and 39–41 (GHT). The Proton acceptor role is filled by Asp12. The Mg(2+) site is built by Asp12 and Gly39. Residues 12–15 (DEGK), 37–40 (NAGH), Thr121, Arg135, Gln215, Thr230, and Arg294 contribute to the IMP site. The active-site Proton donor is the His40. Position 290 to 296 (290 to 296 (TTTKRPR)) interacts with substrate. GTP is bound by residues Arg296, 322–324 (KLD), and 400–402 (STS).

This sequence belongs to the adenylosuccinate synthetase family. Homodimer. Requires Mg(2+) as cofactor.

The protein resides in the cytoplasm. It carries out the reaction IMP + L-aspartate + GTP = N(6)-(1,2-dicarboxyethyl)-AMP + GDP + phosphate + 2 H(+). Its pathway is purine metabolism; AMP biosynthesis via de novo pathway; AMP from IMP: step 1/2. Plays an important role in the de novo pathway of purine nucleotide biosynthesis. Catalyzes the first committed step in the biosynthesis of AMP from IMP. The chain is Adenylosuccinate synthetase from Helicobacter pylori (strain J99 / ATCC 700824) (Campylobacter pylori J99).